The sequence spans 231 residues: Small ribosomal subunit protein uS3 (231 aa).

In terms of domain architecture, KH type-2 spans 39 to 107 (VREFLKEKLK…PAQINIAEVR (69 aa)).

This sequence belongs to the universal ribosomal protein uS3 family. Part of the 30S ribosomal subunit. Forms a tight complex with proteins S10 and S14.

In terms of biological role, binds the lower part of the 30S subunit head. Binds mRNA in the 70S ribosome, positioning it for translation. The polypeptide is Small ribosomal subunit protein uS3 (Colwellia psychrerythraea (strain 34H / ATCC BAA-681) (Vibrio psychroerythus)).